A 310-amino-acid polypeptide reads, in one-letter code: Protoheme IX farnesyltransferase 2 (310 aa).

The next 9 membrane-spanning stretches (helical) occupy residues 25–45 (PGIIFGNLISVAGGFLLAAKG), 49–69 (LVLMLASLVGLSLVVASGCAI), 98–118 (HVLLFGIALGVLGFGILALFT), 121–141 (LALLFAAIGYVVYVGIYSLYM), 145–165 (SVYGTLVGSFSGAVPPVVGYC), 176–196 (VILLLMFSLWQMPHSYAIAIF), 222–242 (IVLYIAVFALVSTMLPLAGYT), 245–265 (AFMAVTCATSLWWLTMALKGY), and 277–297 (QVFGFSIITITALSVTMALDF).

The protein belongs to the UbiA prenyltransferase family. Protoheme IX farnesyltransferase subfamily.

Its subcellular location is the cell inner membrane. The catalysed reaction is heme b + (2E,6E)-farnesyl diphosphate + H2O = Fe(II)-heme o + diphosphate. It participates in porphyrin-containing compound metabolism; heme O biosynthesis; heme O from protoheme: step 1/1. Functionally, converts heme B (protoheme IX) to heme O by substitution of the vinyl group on carbon 2 of heme B porphyrin ring with a hydroxyethyl farnesyl side group. The chain is Protoheme IX farnesyltransferase 2 from Shewanella sp. (strain ANA-3).